The following is a 562-amino-acid chain: Dihydroxy-acid dehydratase (562 aa).

Position 80 (D80) interacts with Mg(2+). [2Fe-2S] cluster is bound at residue C121. 2 residues coordinate Mg(2+): D122 and K123. K123 carries the post-translational modification N6-carboxylysine. C194 serves as a coordination point for [2Fe-2S] cluster. E446 serves as a coordination point for Mg(2+). S472 (proton acceptor) is an active-site residue.

Belongs to the IlvD/Edd family. Homodimer. [2Fe-2S] cluster serves as cofactor. Requires Mg(2+) as cofactor.

The catalysed reaction is (2R)-2,3-dihydroxy-3-methylbutanoate = 3-methyl-2-oxobutanoate + H2O. It carries out the reaction (2R,3R)-2,3-dihydroxy-3-methylpentanoate = (S)-3-methyl-2-oxopentanoate + H2O. The protein operates within amino-acid biosynthesis; L-isoleucine biosynthesis; L-isoleucine from 2-oxobutanoate: step 3/4. It functions in the pathway amino-acid biosynthesis; L-valine biosynthesis; L-valine from pyruvate: step 3/4. Functionally, functions in the biosynthesis of branched-chain amino acids. Catalyzes the dehydration of (2R,3R)-2,3-dihydroxy-3-methylpentanoate (2,3-dihydroxy-3-methylvalerate) into 2-oxo-3-methylpentanoate (2-oxo-3-methylvalerate) and of (2R)-2,3-dihydroxy-3-methylbutanoate (2,3-dihydroxyisovalerate) into 2-oxo-3-methylbutanoate (2-oxoisovalerate), the penultimate precursor to L-isoleucine and L-valine, respectively. This Staphylococcus aureus (strain bovine RF122 / ET3-1) protein is Dihydroxy-acid dehydratase.